The primary structure comprises 268 residues: Ubiquinone biosynthesis protein COQ4 homolog 1, mitochondrial (268 aa).

The span at 1-10 (MFLRRVHPVR) shows a compositional bias: basic residues. The transit peptide at 1 to 18 (MFLRRVHPVRLGHASQRS) directs the protein to the mitochondrion. Residues 1–44 (MFLRRVHPVRLGHASQRSLTTTKSRNESTTTTVEAPQAAPSPPP) form a disordered region. A compositionally biased stretch (low complexity) spans 20 to 38 (TTTKSRNESTTTTVEAPQA). Zn(2+) is bound by residues His-177, Asp-178, His-181, and Glu-193.

This sequence belongs to the COQ4 family. Component of a multi-subunit COQ enzyme complex. The cofactor is Zn(2+).

The protein resides in the mitochondrion inner membrane. It catalyses the reaction a 4-hydroxy-3-methoxy-5-(all-trans-polyprenyl)benzoate + H(+) = a 2-methoxy-6-(all-trans-polyprenyl)phenol + CO2. It functions in the pathway cofactor biosynthesis; ubiquinone biosynthesis. In terms of biological role, lyase that catalyzes the C1-decarboxylation of 4-hydroxy-3-methoxy-5-(all-trans-polyprenyl)benzoic acid into 2-methoxy-6-(all-trans-polyprenyl)phenol during ubiquinone biosynthesis. The sequence is that of Ubiquinone biosynthesis protein COQ4 homolog 1, mitochondrial from Culex quinquefasciatus (Southern house mosquito).